The chain runs to 757 residues: Catalase-peroxidase (757 aa).

Positions 101-248 (WHSAGTYRIG…LAAVQMGLIY (148 aa)) form a cross-link, tryptophyl-tyrosyl-methioninium (Trp-Tyr) (with M-274). Residue His-102 is the Proton acceptor of the active site. Positions 210–231 (SEGVHHPDEHSGAKEKASKNSD) are disordered. The segment covering 212 to 231 (GVHHPDEHSGAKEKASKNSD) has biased composition (basic and acidic residues). Residues 248-274 (YVNPEGPDGRPDPLASARDIRETFARM) constitute a cross-link (tryptophyl-tyrosyl-methioninium (Tyr-Met) (with W-101)). Residue His-289 coordinates heme b. The tract at residues 293–312 (KTHGAAPADNVGPEPEAGEL) is disordered.

It belongs to the peroxidase family. Peroxidase/catalase subfamily. Homodimer or homotetramer. Requires heme b as cofactor. In terms of processing, formation of the three residue Trp-Tyr-Met cross-link is important for the catalase, but not the peroxidase activity of the enzyme.

The catalysed reaction is H2O2 + AH2 = A + 2 H2O. It catalyses the reaction 2 H2O2 = O2 + 2 H2O. Its function is as follows. Bifunctional enzyme with both catalase and broad-spectrum peroxidase activity. The chain is Catalase-peroxidase from Xylella fastidiosa (strain M12).